Here is a 544-residue protein sequence, read N- to C-terminus: Membrane protein insertase YidC (544 aa).

6 helical membrane-spanning segments follow: residues 13–33 (LSLF…SWML), 321–341 (LWYL…DVIP), 343–363 (WGLS…PLTF), 409–429 (LGGC…YSLV), 461–481 (LYFV…FTQL), and 506–526 (MPIM…IYWI).

It belongs to the OXA1/ALB3/YidC family. Type 1 subfamily. Interacts with the Sec translocase complex via SecD. Specifically interacts with transmembrane segments of nascent integral membrane proteins during membrane integration.

The protein resides in the cell inner membrane. Its function is as follows. Required for the insertion and/or proper folding and/or complex formation of integral membrane proteins into the membrane. Involved in integration of membrane proteins that insert both dependently and independently of the Sec translocase complex, as well as at least some lipoproteins. Aids folding of multispanning membrane proteins. This is Membrane protein insertase YidC from Borreliella afzelii (strain PKo) (Borrelia afzelii).